A 504-amino-acid polypeptide reads, in one-letter code: Deoxyguanosinetriphosphate triphosphohydrolase (504 aa).

The region spanning 66–273 is the HD domain; the sequence is RLTHSLEVQQ…MEAADDISYC (208 aa).

This sequence belongs to the dGTPase family. Type 1 subfamily. As to quaternary structure, homotetramer. Mg(2+) serves as cofactor.

The catalysed reaction is dGTP + H2O = 2'-deoxyguanosine + triphosphate + H(+). Its function is as follows. dGTPase preferentially hydrolyzes dGTP over the other canonical NTPs. The polypeptide is Deoxyguanosinetriphosphate triphosphohydrolase (Cronobacter sakazakii (strain ATCC BAA-894) (Enterobacter sakazakii)).